Reading from the N-terminus, the 68-residue chain is Intracellular calcium channel modulator CCP-Ts (68 aa).

The first 23 residues, 1-23 (MNPKLLIVIGLLLATGVCSFAKA), serve as a signal peptide directing secretion. 3 cysteine pairs are disulfide-bonded: Cys-33–Cys-47, Cys-40–Cys-53, and Cys-46–Cys-62.

This sequence belongs to the scorpion calcin-like family. In terms of tissue distribution, expressed by the venom gland. In intravenously injected mice, the labeled toxin has preference for heart, liver and lungs.

It localises to the secreted. The protein localises to the nucleus. Its function is as follows. Cell penetrating peptide (CPP) that increases intracellular calcium release through the activation of nuclear inositol 1,4,5-trisphosphate receptors (ITPR) of cardiomyocytes, thereby causing an increase in the contraction frequency of these cells. In vivo, this toxin is not lethal to mice, hovewer anti-CPP serum reduces venom lethality, suggesting that this toxin is lethal when it acts in synergy with other venom components. This Tityus serrulatus (Brazilian scorpion) protein is Intracellular calcium channel modulator CCP-Ts.